Consider the following 81-residue polypeptide: Sulfur carrier protein TusA (81 aa).

The active-site Cysteine persulfide intermediate is cysteine 19.

The protein belongs to the sulfur carrier protein TusA family.

It localises to the cytoplasm. Sulfur carrier protein which probably makes part of a sulfur-relay system. The chain is Sulfur carrier protein TusA from Shewanella putrefaciens (strain CN-32 / ATCC BAA-453).